A 294-amino-acid polypeptide reads, in one-letter code: 4-hydroxy-tetrahydrodipicolinate synthase (294 aa).

T47 contacts pyruvate. The active-site Proton donor/acceptor is Y135. The active-site Schiff-base intermediate with substrate is the K163. I205 is a pyruvate binding site.

It belongs to the DapA family. Homotetramer; dimer of dimers.

Its subcellular location is the cytoplasm. The enzyme catalyses L-aspartate 4-semialdehyde + pyruvate = (2S,4S)-4-hydroxy-2,3,4,5-tetrahydrodipicolinate + H2O + H(+). The protein operates within amino-acid biosynthesis; L-lysine biosynthesis via DAP pathway; (S)-tetrahydrodipicolinate from L-aspartate: step 3/4. Catalyzes the condensation of (S)-aspartate-beta-semialdehyde [(S)-ASA] and pyruvate to 4-hydroxy-tetrahydrodipicolinate (HTPA). The sequence is that of 4-hydroxy-tetrahydrodipicolinate synthase from Rickettsia prowazekii (strain Madrid E).